The sequence spans 165 residues: Nucleotide-binding protein CHY_1197 (165 aa).

It belongs to the YajQ family.

Functionally, nucleotide-binding protein. This is Nucleotide-binding protein CHY_1197 from Carboxydothermus hydrogenoformans (strain ATCC BAA-161 / DSM 6008 / Z-2901).